A 337-amino-acid chain; its full sequence is Protein-methionine-sulfoxide reductase catalytic subunit MsrP (337 aa).

The segment at residues 1-50 (MLIKLPSASGSKESDVTPESIYLSRRTLLASSLAGLAVTALPRWASAADA) is a signal peptide (tat-type signal). Mo-molybdopterin is bound by residues Asn-94, 97–98 (YE), Cys-152, Thr-187, Asn-237, Arg-242, and 253–255 (SVK).

It belongs to the MsrP family. Heterodimer of a catalytic subunit (MsrP) and a heme-binding subunit (MsrQ). The cofactor is Mo-molybdopterin. Predicted to be exported by the Tat system. The position of the signal peptide cleavage has not been experimentally proven.

The protein resides in the periplasm. The catalysed reaction is L-methionyl-[protein] + a quinone + H2O = L-methionyl-(S)-S-oxide-[protein] + a quinol. The enzyme catalyses L-methionyl-[protein] + a quinone + H2O = L-methionyl-(R)-S-oxide-[protein] + a quinol. Part of the MsrPQ system that repairs oxidized periplasmic proteins containing methionine sulfoxide residues (Met-O), using respiratory chain electrons. Thus protects these proteins from oxidative-stress damage caused by reactive species of oxygen and chlorine generated by the host defense mechanisms. MsrPQ is essential for the maintenance of envelope integrity under bleach stress, rescuing a wide series of structurally unrelated periplasmic proteins from methionine oxidation. The catalytic subunit MsrP is non-stereospecific, being able to reduce both (R-) and (S-) diastereoisomers of methionine sulfoxide. The chain is Protein-methionine-sulfoxide reductase catalytic subunit MsrP from Pseudomonas syringae pv. tomato (strain ATCC BAA-871 / DC3000).